Consider the following 317-residue polypeptide: Tricarboxylate transport protein B, mitochondrial (317 aa).

The propeptide at 1 to 20 is removed in mature form; it reads MSGSPKFVSPFHRPHCLSAA. Solcar repeat units lie at residues 29-117, 128-214, and 224-309; these read THPG…LSNQ, TRGL…LRNW, and INPV…VVKV. The next 4 helical transmembrane spans lie at 35-55, 130-150, 223-243, and 294-314; these read ILAG…TEYV, GLIC…CPME, SINP…SVFG, and MDVA…NKVW.

This sequence belongs to the mitochondrial carrier (TC 2.A.29) family. Possesses a short cleavable presequence, which, however, is found to be dispensable both for targeting to mitochondria and insertion into the inner membrane. However, the presequence is required to keep SLC25A1 in a soluble state and thus in an import-competent state. Mature SLC25A1 lacking the presequence is prone to aggregation.

It is found in the mitochondrion inner membrane. It carries out the reaction (S)-malate(in) + citrate(out) = (S)-malate(out) + citrate(in). The enzyme catalyses D-threo-isocitrate(in) + citrate(out) = D-threo-isocitrate(out) + citrate(in). The catalysed reaction is citrate(out) + succinate(in) = citrate(in) + succinate(out). It catalyses the reaction cis-aconitate(in) + citrate(out) = cis-aconitate(out) + citrate(in). It carries out the reaction trans-aconitate(in) + citrate(out) = trans-aconitate(out) + citrate(in). The enzyme catalyses phosphoenolpyruvate(in) + citrate(out) = phosphoenolpyruvate(out) + citrate(in). The catalysed reaction is maleate(in) + citrate(out) = maleate(out) + citrate(in). Mitochondrial electroneutral antiporter that exports citrate from the mitochondria into the cytosol in exchange for malate. Also able to mediate the exchange of citrate for isocitrate, phosphoenolpyruvate, cis-aconitate and to a lesser extent trans-aconitate, maleate and succinate. In the cytoplasm, citrate plays important roles in fatty acid and sterol synthesis, regulation of glycolysis, protein acetylation, and other physiopathological processes. The sequence is that of Tricarboxylate transport protein B, mitochondrial from Danio rerio (Zebrafish).